Here is a 558-residue protein sequence, read N- to C-terminus: Dimethylaniline monooxygenase [N-oxide-forming] 4 (558 aa).

FAD-binding positions include 9 to 13 (GAGVS), E32, and 40 to 41 (LW). NADP(+)-binding positions include 60–61 (TN) and 195–198 (TGGD). The helical transmembrane segment at 517-537 (AWGAPVLLASLLLICKSSLFL) threads the bilayer.

The protein belongs to the FMO family. FAD serves as cofactor. Liver.

The protein resides in the microsome membrane. The protein localises to the endoplasmic reticulum membrane. The catalysed reaction is N,N-dimethylaniline + NADPH + O2 + H(+) = N,N-dimethylaniline N-oxide + NADP(+) + H2O. This protein is involved in the oxidative metabolism of a variety of xenobiotics such as drugs and pesticides. The protein is Dimethylaniline monooxygenase [N-oxide-forming] 4 (FMO4) of Homo sapiens (Human).